We begin with the raw amino-acid sequence, 6061 residues long: Intermembrane lipid transfer protein vps13B (6061 aa).

Positions 2 to 115 constitute a Chorein N-terminal domain; that stretch reads FESLVADIIA…QLELKRKKLE (114 aa). Disordered regions lie at residues 590-623, 803-828, 1386-1414, 1604-1644, 2747-2784, 2950-2972, 3364-3401, 3855-3876, 4011-4068, 4107-4132, 4262-4297, 4321-4442, 4601-4631, 4753-4797, 4861-4882, 5003-5030, and 5372-5429; these read PKYKRHQENKENKENQENQENENKNEINNNNNNK, DIKNSDNNNNNISDNINNNNNINNKN, QQQQQQEEEQQQKEEEQHGGEFDLQNVSS, SSNN…GTLS, QTNQNNQKNRNPFKFYDQSGASNNNNDNDNDEYDEDQE, GLNNSFDLNNSGGGNNNNNNSST, LNRNSNSDSDNEENHNNNQNNQNNIDDDDGDGDDDDDD, QQQQPIINGDYGGIDSNNRNKK, QQQQ…FKNN, ELEKKKRERKENSKSKSLVAPDRPDE, NSSNNNNNNNNNGLSASTSNNLNNTMNDSNNNYNGR, SQSI…TSPG, TSSPSSSSNKVNNNYNNMDDEEDKKISKKSL, NNNN…TQEF, NAGGSSHYSSNGSNGSFSSISQ, LATKGKDNNKDNSNNNNNNNNNNNDGIE, and NINN…IGQD. A compositionally biased stretch (basic and acidic residues) spans 595–614; the sequence is HQENKENKENQENQENENKN. A compositionally biased stretch (basic and acidic residues) spans 1395–1406; that stretch reads QQQKEEEQHGGE. Residues 2747 to 2756 show a composition bias toward polar residues; the sequence is QTNQNNQKNR. Residues 2774–2784 are compositionally biased toward acidic residues; the sequence is NDNDEYDEDQE. Acidic residues predominate over residues 3388-3401; that stretch reads IDDDDGDGDDDDDD. Residues 4015 to 4024 show a composition bias toward basic and acidic residues; the sequence is QEKEKEIEKE. The span at 4031–4040 shows a compositional bias: low complexity; it reads LKNNNNISIN. A compositionally biased stretch (acidic residues) spans 4041 to 4057; the sequence is DNDDDDDDDDNDNDENN. A compositionally biased stretch (low complexity) spans 4058-4068; it reads NENYEFNFKNN. The segment covering 4107 to 4120 has biased composition (basic and acidic residues); that stretch reads ELEKKKRERKENSK. 2 stretches are compositionally biased toward low complexity: residues 4330–4383 and 4399–4429; these read TTTT…VGSN and NNNNNNNNNNNNNNNNNNNNNNNNNNNNNNN. The span at 4430-4441 shows a compositional bias: polar residues; sequence SNDNQVNFSTSP. Low complexity-rich tracts occupy residues 4601–4617 and 4753–4784; these read TSSPSSSSNKVNNNYNN and NNNNNNNDVNNNNTNNNNNNNNNNNNNKSNEN. A compositionally biased stretch (polar residues) spans 4785 to 4794; it reads SQDQPPSIKT. 2 stretches are compositionally biased toward low complexity: residues 5013–5030 and 5372–5384; these read DNSNNNNNNNNNNNDGIE and NINNNNNNLNNDN. Basic and acidic residues predominate over residues 5385–5409; the sequence is NKNKNNNDKNKNNDKNNKNNNDKNN. Over residues 5410–5421 the composition is skewed to low complexity; it reads NDNNNNNNNNNN.

It belongs to the VPS13 family.

The protein resides in the membrane. Functionally, mediates the transfer of lipids between membranes at organelle contact sites. The polypeptide is Intermembrane lipid transfer protein vps13B (vps13B) (Dictyostelium discoideum (Social amoeba)).